The primary structure comprises 91 residues: Essential MCU regulator, mitochondrial (91 aa).

Residues 45–65 (VIPFGLLGVVLTVIPGLLIGA) form a helical membrane-spanning segment.

The protein belongs to the SMDT1/EMRE family.

It localises to the mitochondrion inner membrane. Its function is as follows. Essential regulatory subunit of the mitochondrial calcium uniporter (mcu) channel, a protein that mediates calcium uptake into mitochondria. This is Essential MCU regulator, mitochondrial from Aedes aegypti (Yellowfever mosquito).